Consider the following 219-residue polypeptide: Elongation factor Ts (219 aa).

Positions 81 to 84 (SDFV) are involved in Mg(2+) ion dislocation from EF-Tu.

It belongs to the EF-Ts family.

It is found in the cytoplasm. Functionally, associates with the EF-Tu.GDP complex and induces the exchange of GDP to GTP. It remains bound to the aminoacyl-tRNA.EF-Tu.GTP complex up to the GTP hydrolysis stage on the ribosome. The chain is Elongation factor Ts from Koribacter versatilis (strain Ellin345).